A 922-amino-acid polypeptide reads, in one-letter code: Probable dipeptidyl-aminopeptidase B (922 aa).

The span at 1-16 (MATEKGHSRDDEERVP) shows a compositional bias: basic and acidic residues. Residues 1-21 (MATEKGHSRDDEERVPLTRGS) form a disordered region. The Cytoplasmic portion of the chain corresponds to 1 to 99 (MATEKGHSRD…KPMHKSVKIA (99 aa)). The helical; Signal-anchor for type II membrane protein transmembrane segment at 100–120 (LWSLLFLSLGGWSLAFVLFIF) threads the bilayer. Topologically, residues 121–922 (RSHDTYQTPI…AGLYKFKHLC (802 aa)) are vacuolar. N-linked (GlcNAc...) asparagine glycosylation is found at asparagine 135, asparagine 200, asparagine 351, and asparagine 574. Serine 756 serves as the catalytic Charge relay system. N-linked (GlcNAc...) asparagine glycosylation is present at asparagine 815. Active-site charge relay system residues include aspartate 833 and histidine 866. An N-linked (GlcNAc...) asparagine glycan is attached at asparagine 902.

This sequence belongs to the peptidase S9B family.

The protein resides in the vacuole membrane. The enzyme catalyses Release of an N-terminal dipeptide, Xaa-Yaa-|-Zaa-, from a polypeptide, preferentially when Yaa is Pro, provided Zaa is neither Pro nor hydroxyproline.. Type IV dipeptidyl-peptidase which removes N-terminal dipeptides sequentially from polypeptides having unsubstituted N-termini provided that the penultimate residue is proline. This chain is Probable dipeptidyl-aminopeptidase B (DAPB), found in Ajellomyces capsulatus (strain NAm1 / WU24) (Darling's disease fungus).